The following is a 360-amino-acid chain: Phenylalanine--tRNA ligase alpha subunit (360 aa).

A Mg(2+)-binding site is contributed by E260.

The protein belongs to the class-II aminoacyl-tRNA synthetase family. Phe-tRNA synthetase alpha subunit type 1 subfamily. Tetramer of two alpha and two beta subunits. Mg(2+) is required as a cofactor.

The protein resides in the cytoplasm. It catalyses the reaction tRNA(Phe) + L-phenylalanine + ATP = L-phenylalanyl-tRNA(Phe) + AMP + diphosphate + H(+). The protein is Phenylalanine--tRNA ligase alpha subunit of Rhizobium rhizogenes (strain K84 / ATCC BAA-868) (Agrobacterium radiobacter).